Here is a 323-residue protein sequence, read N- to C-terminus: tRNA dimethylallyltransferase (323 aa).

12–19 (GPTAAGKT) serves as a coordination point for ATP. 14–19 (TAAGKT) contributes to the substrate binding site. Interaction with substrate tRNA stretches follow at residues 37 to 40 (DSAL) and 161 to 165 (QRLIR).

Belongs to the IPP transferase family. In terms of assembly, monomer. Mg(2+) is required as a cofactor.

It carries out the reaction adenosine(37) in tRNA + dimethylallyl diphosphate = N(6)-dimethylallyladenosine(37) in tRNA + diphosphate. Functionally, catalyzes the transfer of a dimethylallyl group onto the adenine at position 37 in tRNAs that read codons beginning with uridine, leading to the formation of N6-(dimethylallyl)adenosine (i(6)A). This is tRNA dimethylallyltransferase from Pseudomonas savastanoi pv. phaseolicola (strain 1448A / Race 6) (Pseudomonas syringae pv. phaseolicola (strain 1448A / Race 6)).